A 370-amino-acid chain; its full sequence is A-type ATP synthase subunit C (370 aa).

It belongs to the V-ATPase V0D/AC39 subunit family. Has multiple subunits with at least A(3), B(3), C, D, E, F, H, I and proteolipid K(x).

Its subcellular location is the cell membrane. Functionally, component of the A-type ATP synthase that produces ATP from ADP in the presence of a proton gradient across the membrane. The protein is A-type ATP synthase subunit C of Pyrococcus abyssi (strain GE5 / Orsay).